The primary structure comprises 201 residues: Large ribosomal subunit protein uL4 (201 aa).

A disordered region spans residues 45 to 66 (AQLTRSEVSGGGKKPWRQKGTG).

It belongs to the universal ribosomal protein uL4 family. As to quaternary structure, part of the 50S ribosomal subunit.

One of the primary rRNA binding proteins, this protein initially binds near the 5'-end of the 23S rRNA. It is important during the early stages of 50S assembly. It makes multiple contacts with different domains of the 23S rRNA in the assembled 50S subunit and ribosome. Its function is as follows. Forms part of the polypeptide exit tunnel. This Aeromonas hydrophila subsp. hydrophila (strain ATCC 7966 / DSM 30187 / BCRC 13018 / CCUG 14551 / JCM 1027 / KCTC 2358 / NCIMB 9240 / NCTC 8049) protein is Large ribosomal subunit protein uL4.